Here is a 270-residue protein sequence, read N- to C-terminus: Ethanolamine ammonia-lyase small subunit (270 aa).

Val161, Glu182, and Cys211 together coordinate adenosylcob(III)alamin.

It belongs to the EutC family. In terms of assembly, the basic unit is a heterodimer which dimerizes to form tetramers. The heterotetramers trimerize; 6 large subunits form a core ring with 6 small subunits projecting outwards. The cofactor is adenosylcob(III)alamin.

The protein resides in the bacterial microcompartment. It carries out the reaction ethanolamine = acetaldehyde + NH4(+). It participates in amine and polyamine degradation; ethanolamine degradation. Its function is as follows. Catalyzes the deamination of various vicinal amino-alcohols to oxo compounds. Allows this organism to utilize ethanolamine as the sole source of nitrogen and carbon in the presence of external vitamin B12. This is Ethanolamine ammonia-lyase small subunit from Azotobacter vinelandii (strain DJ / ATCC BAA-1303).